The chain runs to 354 residues: UPF0597 protein PPA0217 (354 aa).

The protein belongs to the UPF0597 family.

The sequence is that of UPF0597 protein PPA0217 from Cutibacterium acnes (strain DSM 16379 / KPA171202) (Propionibacterium acnes).